Here is a 318-residue protein sequence, read N- to C-terminus: Small ribosomal subunit protein uS3 (318 aa).

One can recognise a KH type-2 domain in the interval 17 to 86 (MDEYFAEQLS…NPQIDAQEVK (70 aa)). Residues 198-229 (SVEVEEPAEKPAEKPAEKPAEKAAAPKKEAAK) show a composition bias toward basic and acidic residues. The disordered stretch occupies residues 198-275 (SVEVEEPAEK…VQAETSEEIE (78 aa)). Over residues 234-250 (APAPEAPAPAPEAPAPA) the composition is skewed to pro residues. Residues 253–275 (EEAEVAEPEEAEEVQAETSEEIE) show a composition bias toward acidic residues.

Belongs to the universal ribosomal protein uS3 family. Part of the 30S ribosomal subunit.

Its function is as follows. Binds the lower part of the 30S subunit head. The polypeptide is Small ribosomal subunit protein uS3 (Methanosarcina acetivorans (strain ATCC 35395 / DSM 2834 / JCM 12185 / C2A)).